We begin with the raw amino-acid sequence, 183 residues long: Calmodulin-like protein 3 (183 aa).

4 consecutive EF-hand domains span residues 7 to 42 (EQIAEFREAFNLFDKDGDGTITSKELGTVMGSLGQS), 43 to 78 (PTEAELKKMVEEVDADGSGSIEFEEFLGLLARKLRD), 80 to 115 (GAEDDIRDAFRVFDKDQNGFITPDELRHVMANLSDP), and 116 to 151 (LSDDELADMLHEADSDGDGQINYNEFLKVMMAKRRQ). Residues aspartate 20, aspartate 22, aspartate 24, threonine 26, glutamate 31, aspartate 56, aspartate 58, serine 60, serine 62, glutamate 67, aspartate 93, aspartate 95, asparagine 97, glutamate 104, aspartate 129, aspartate 131, aspartate 133, glutamine 135, and glutamate 140 each contribute to the Ca(2+) site. Residues 154–183 (MEGHGSGGHRSSNSHKKSGCCGPNSSCTIL) are disordered. S-palmitoyl cysteine attachment occurs at residues cysteine 173 and cysteine 174. Cysteine 180 carries the cysteine methyl ester modification. A lipid anchor (S-farnesyl cysteine) is attached at cysteine 180. The propeptide at 181–183 (TIL) is removed in mature form.

The protein belongs to the calmodulin family.

It localises to the membrane. Functionally, potential calcium sensor. This chain is Calmodulin-like protein 3 (CML3), found in Oryza sativa subsp. japonica (Rice).